Here is a 124-residue protein sequence, read N- to C-terminus: Ribonuclease pancreatic (124 aa).

Residues 1–13 are compositionally biased toward basic and acidic residues; that stretch reads KETAAAKFERQHM. Residues 1 to 25 form a disordered region; it reads KETAAAKFERQHMDSSTSSASSSNY. The substrate site is built by Lys7 and Arg10. His12 (proton acceptor) is an active-site residue. Cystine bridges form between Cys26–Cys84, Cys40–Cys95, Cys58–Cys110, and Cys65–Cys72. Residues 41 to 45, Lys66, and Arg85 each bind substrate; that span reads KPVNT. The active-site Proton donor is His119.

Belongs to the pancreatic ribonuclease family. Monomer. Interacts with and forms tight 1:1 complexes with RNH1. Dimerization of two such complexes may occur. Interaction with RNH1 inhibits this protein. In terms of tissue distribution, pancreas.

It is found in the secreted. The enzyme catalyses an [RNA] containing cytidine + H2O = an [RNA]-3'-cytidine-3'-phosphate + a 5'-hydroxy-ribonucleotide-3'-[RNA].. The catalysed reaction is an [RNA] containing uridine + H2O = an [RNA]-3'-uridine-3'-phosphate + a 5'-hydroxy-ribonucleotide-3'-[RNA].. Its function is as follows. Endonuclease that catalyzes the cleavage of RNA on the 3' side of pyrimidine nucleotides. Acts on single-stranded and double-stranded RNA. This Tragelaphus oryx (Eland) protein is Ribonuclease pancreatic (RNASE1).